A 335-amino-acid polypeptide reads, in one-letter code: Methionine import ATP-binding protein MetN 1 (335 aa).

The ABC transporter domain occupies 2 to 242 (IEFQQVHKTY…PQHPTTKRFV (241 aa)). 38–45 (GHSGAGKS) serves as a coordination point for ATP.

Belongs to the ABC transporter superfamily. Methionine importer (TC 3.A.1.24) family. In terms of assembly, the complex is composed of two ATP-binding proteins (MetN), two transmembrane proteins (MetI) and a solute-binding protein (MetQ).

The protein resides in the cell inner membrane. It carries out the reaction L-methionine(out) + ATP + H2O = L-methionine(in) + ADP + phosphate + H(+). The catalysed reaction is D-methionine(out) + ATP + H2O = D-methionine(in) + ADP + phosphate + H(+). Functionally, part of the ABC transporter complex MetNIQ involved in methionine import. Responsible for energy coupling to the transport system. The chain is Methionine import ATP-binding protein MetN 1 from Pseudomonas putida (strain ATCC 47054 / DSM 6125 / CFBP 8728 / NCIMB 11950 / KT2440).